Reading from the N-terminus, the 695-residue chain is Segment polarity protein dishevelled homolog DVL-1 (695 aa).

The DIX domain occupies 1–85 (MAETKIIYHM…RVVSWLVLAE (85 aa)). The disordered stretch occupies residues 89-236 (SDAGSQGTDS…RLRQTDRASS (148 aa)). The segment covering 142 to 151 (SHRRERARRR) has biased composition (basic residues). A compositionally biased stretch (basic and acidic residues) spans 152 to 171 (NRDEAARTNGHPRGDRRREL). The span at 177-192 (SASTVLSSELESSSFI) shows a compositional bias: low complexity. The residue at position 194 (S194) is a Phosphoserine. The span at 201–214 (SRLSSSTEQSTSSR) shows a compositional bias: low complexity. Residues 215 to 228 (LIRKHKCRRRKQRL) are compositionally biased toward basic residues. The region spanning 251-323 (TVTLNMERHH…NDDAVRVLRE (73 aa)) is the PDZ domain. One can recognise a DEP domain in the interval 425-499 (PDSGLEIRDR…SEQCYYVFGD (75 aa)). Residues 551 to 580 (PAYQDPGFSYGSGSAGSQQSEGSKSSGSTR) show a composition bias toward low complexity. The disordered stretch occupies residues 551–641 (PAYQDPGFSY…SQASAVAPGL (91 aa)). The segment covering 622 to 635 (SQLSRGSSPRSQAS) has biased composition (polar residues).

It belongs to the DSH family. Interacts with BRD7 and INVS. Interacts (via PDZ domain) with the VANGL1 and VANGL2 (via C-terminus). Interacts (via PDZ domain) with NXN. Interacts with CXXC4. Interacts with ARRB1; the interaction is enhanced by phosphorylation of DVL1. Interacts with CYLD. Interacts (via PDZ domain) with RYK. Self-associates (via DIX domain) and forms higher homooligomers. Interacts (via PDZ domain) with DACT1 and FZD7, where DACT1 and FZD7 compete for the same binding site. Interacts (via DEP domain) with MUSK; the interaction is direct and mediates the formation a DVL1, MUSK and PAK1 ternary complex involved in AChR clustering. Interacts (via PDZ domain) with TMEM88. Interacts with DCDC2. Interacts with FOXK2. Interacts with PKD1 (via extracellular domain). Interacts (via PDZ domain) with CCDC88C/DAPLE; competes with CCDC88C for binding to frizzled receptor FZD7 and dissociates from CCDC88C following initiation of non-canonical Wnt signaling when CCDC88C displaces DVL1 from ligand-activated FZD7. Ubiquitinated; undergoes both 'Lys-48'-linked ubiquitination, leading to its subsequent degradation by the ubiquitin-proteasome pathway, and 'Lys-63'-linked ubiquitination. The interaction with INVS is required for ubiquitination. Deubiquitinated by CYLD, which acts on 'Lys-63'-linked ubiquitin chains.

It localises to the cell membrane. It is found in the cytoplasm. The protein localises to the cytosol. The protein resides in the cytoplasmic vesicle. In terms of biological role, participates in Wnt signaling by binding to the cytoplasmic C-terminus of frizzled family members and transducing the Wnt signal to down-stream effectors. Plays a role both in canonical and non-canonical Wnt signaling. Plays a role in the signal transduction pathways mediated by multiple Wnt genes. Required for LEF1 activation upon WNT1 and WNT3A signaling. DVL1 and PAK1 form a ternary complex with MUSK which is important for MUSK-dependent regulation of AChR clustering during the formation of the neuromuscular junction (NMJ). The protein is Segment polarity protein dishevelled homolog DVL-1 (Dvl1) of Rattus norvegicus (Rat).